Consider the following 343-residue polypeptide: tRNA N6-adenosine threonylcarbamoyltransferase (343 aa).

Fe cation-binding residues include His111 and His115. Substrate contacts are provided by residues Ala133–Gly137, Asp166, Gly179, Asp183, and Asn273. Position 301 (Asp301) interacts with Fe cation.

This sequence belongs to the KAE1 / TsaD family. Fe(2+) is required as a cofactor.

It localises to the cytoplasm. It carries out the reaction L-threonylcarbamoyladenylate + adenosine(37) in tRNA = N(6)-L-threonylcarbamoyladenosine(37) in tRNA + AMP + H(+). Required for the formation of a threonylcarbamoyl group on adenosine at position 37 (t(6)A37) in tRNAs that read codons beginning with adenine. Is involved in the transfer of the threonylcarbamoyl moiety of threonylcarbamoyl-AMP (TC-AMP) to the N6 group of A37, together with TsaE and TsaB. TsaD likely plays a direct catalytic role in this reaction. The chain is tRNA N6-adenosine threonylcarbamoyltransferase from Geotalea uraniireducens (strain Rf4) (Geobacter uraniireducens).